The chain runs to 237 residues: Lipid A 1-diphosphate synthase (237 aa).

Residues 1-5 are Cytoplasmic-facing; sequence MIKNL. The chain crosses the membrane as a helical span at residues 6-26; it reads PQIVLLNIVGLALFLSWYIPV. Over 27 to 62 the chain is Periplasmic; it reads NHGFWLPIDADIFYFFNQKLVESKAFLWLVALTNNR. The chain crosses the membrane as a helical span at residues 63 to 83; that stretch reads AFDGCSLLAMGMLMLSFWLKE. Topologically, residues 84–90 are cytoplasmic; the sequence is NAPGRRR. The helical transmembrane segment at 91–111 threads the bilayer; sequence IVIIGLVMLLTAVVLNQLGQA. Topologically, residues 112–145 are periplasmic; sequence LIPVKRASPTLTFTDINRVSELLSVPTKDASRDS. Residue K167 is a topological domain, cytoplasmic. A helical transmembrane segment spans residues 168-188; sequence VAGLIALIIFVVFAFPRVMIG. Topologically, residues 189–194 are periplasmic; it reads AHWFTD. The helical transmembrane segment at 195–215 threads the bilayer; sequence IIVGSMTVILIGLPWVLLTPL. Over 216–237 the chain is Cytoplasmic; sequence SDRLITFFDKSLPGKNKHFQNK.

Belongs to the LpxT phosphotransferase family.

Its subcellular location is the cell inner membrane. It carries out the reaction di-trans,octa-cis-undecaprenyl diphosphate + alpha-Kdo-(2-&gt;4)-alpha-Kdo-(2-&gt;6)-lipid A (E. coli) = (Kdo)2-lipid A 1-diphosphate + di-trans,octa-cis-undecaprenyl phosphate. The protein operates within bacterial outer membrane biogenesis; lipopolysaccharide biosynthesis. With respect to regulation, inhibited by BasR. This regulation does not occur at the level of transcription, but rather following the assembly of LpxT into the inner membrane. In terms of biological role, involved in the modification of the lipid A domain of lipopolysaccharides (LPS). Transfers a phosphate group from undecaprenyl pyrophosphate (C55-PP) to lipid A to form lipid A 1-diphosphate. Contributes to the recycling of undecaprenyl phosphate (C55-P). In vitro, has low undecaprenyl-diphosphate phosphatase activity. This is Lipid A 1-diphosphate synthase from Escherichia coli (strain K12).